Consider the following 752-residue polypeptide: Coiled-coil domain-containing protein 157 (752 aa).

Polar residues predominate over residues 135–154 (QQPLPQKGANQRETPTSKPT). 2 disordered regions span residues 135-163 (QQPLPQKGANQRETPTSKPTTKGEPARSP) and 316-336 (QALKQEQGARRRQAEEDEQCL). 2 coiled-coil regions span residues 276-544 (AAEQ…LLVA) and 579-615 (DHMERQVQSNDIRIRVLQEENGRLQSMLSKIREVAQQ). Positions 316–329 (QALKQEQGARRRQA) are enriched in basic and acidic residues. Disordered stretches follow at residues 620 to 707 (LIPQ…QPSK) and 731 to 752 (RKRLSPGRGQASSAHQPQERPM). The span at 628 to 648 (SPSSKGTQGATPPVQAKSTSP) shows a compositional bias: polar residues. Residues 671–692 (TSPPRQPCTSPPRQPCTSPPRQ) show a composition bias toward pro residues. A compositionally biased stretch (polar residues) spans 693 to 707 (PCTSPSRQPCSQPSK).

The polypeptide is Coiled-coil domain-containing protein 157 (CCDC157) (Homo sapiens (Human)).